We begin with the raw amino-acid sequence, 2157 residues long: Genome polyprotein (2157 aa).

A lipid anchor (N-myristoyl glycine; by host) is attached at Gly2. Over 2–1470 the chain is Cytoplasmic; that stretch reads GAQVSRQNVG…DLSIANSIIT (1469 aa). The segment at 567–584 is amphipathic alpha-helix; the sequence is PIEQNPVENYIDEVLNEV. Residues His875 and Asp892 each act as for protease 2A activity in the active site. Cys909 and Cys911 together coordinate Zn(2+). The active-site For protease 2A activity is Cys963. 2 residues coordinate Zn(2+): Cys969 and His971. The membrane-binding stretch occupies residues 1095 to 1164; it reads SDSWLKKFTE…NLRAADNATQ (70 aa). The tract at residues 1095–1228 is oligomerization; sequence SDSWLKKFTE…PPGTGKSITT (134 aa). The segment at 1116-1120 is RNA-binding; the sequence is GNKIS. Residues 1188–1350 form the SF3 helicase domain; the sequence is EAKRIKVLYN…YKDAQGKLNV (163 aa). Residues Cys1357, Cys1368, and Cys1373 each contribute to the Zn(2+) site. A C4-type; degenerate zinc finger spans residues 1357–1373; it reads CNVNTKIGNAKCCPFVC. The segment at 1400 to 1407 is RNA-binding; sequence EDKRRRQV. Residues 1411 to 1416 form an oligomerization region; sequence MSAIFQ. An intramembrane segment occupies 1471–1486; it reads IIANIISIAGIIFVIY. Residues 1487–2157 lie on the Cytoplasmic side of the membrane; sequence KLFCTLQGPY…LLKHEWYEKF (671 aa). At Tyr1496 the chain carries O-(5'-phospho-RNA)-tyrosine. In terms of domain architecture, Peptidase C3 spans 1515–1693; it reads GPEEEFGRSI…FSAMLLRSYF (179 aa). Residues His1554, Glu1585, and Cys1661 each act as for protease 3C activity in the active site. A RdRp catalytic domain is found at 1925-2038; it reads DCIMAFDYTN…SYKYTLDMEA (114 aa). Residues Asp1931 and Asp2024 each coordinate Mg(2+).

The protein belongs to the picornaviruses polyprotein family. As to quaternary structure, interacts with capsid protein VP1 and capsid protein VP3 to form heterotrimeric protomers. Interacts with capsid protein VP0, and capsid protein VP3 to form heterotrimeric protomers. Five protomers subsequently associate to form pentamers which serve as building blocks for the capsid. Interacts with capsid protein VP2, capsid protein VP3 and capsid protein VP4 following cleavage of capsid protein VP0. In terms of assembly, interacts with capsid protein VP1 and capsid protein VP3 in the mature capsid. As to quaternary structure, interacts with capsid protein VP0 and capsid protein VP1 to form heterotrimeric protomers. Five protomers subsequently associate to form pentamers which serve as building blocks for the capsid. Interacts with capsid protein VP4 in the mature capsid. Interacts with protein 2C; this interaction may be important for virion morphogenesis. Interacts with capsid protein VP1 and capsid protein VP3. In terms of assembly, homodimer. As to quaternary structure, homohexamer; forms a hexameric ring structure with 6-fold symmetry characteristic of AAA+ ATPases. Interacts (via N-terminus) with host RTN3 (via reticulon domain); this interaction is important for viral replication. Interacts with capsid protein VP3; this interaction may be important for virion morphogenesis. Interacts with protein 3CD. In terms of assembly, homodimer. Interacts with host GBF1. Interacts (via GOLD domain) with host ACBD3 (via GOLD domain); this interaction allows the formation of a viral protein 3A/ACBD3 heterotetramer with a 2:2 stoichiometry, which will stimulate the recruitment of host PI4KB in order to synthesize PI4P at the viral RNA replication sites. As to quaternary structure, interacts with RNA-directed RNA polymerase. Interacts with protein 3AB and with RNA-directed RNA polymerase. In terms of assembly, interacts with Viral protein genome-linked and with protein 3CD. Mg(2+) is required as a cofactor. Specific enzymatic cleavages in vivo by the viral proteases yield processing intermediates and the mature proteins. In terms of processing, myristoylation is required for the formation of pentamers during virus assembly. Further assembly of 12 pentamers and a molecule of genomic RNA generates the provirion. Post-translationally, during virion maturation, immature virions are rendered infectious following cleavage of VP0 into VP4 and VP2. This maturation seems to be an autocatalytic event triggered by the presence of RNA in the capsid and it is followed by a conformational change infectious virion. Myristoylation is required during RNA encapsidation and formation of the mature virus particle. In terms of processing, VPg is uridylylated by the polymerase into VPg-pUpU. This acts as a nucleotide-peptide primer for the genomic RNA replication.

Its subcellular location is the virion. The protein localises to the host cytoplasm. It localises to the host cytoplasmic vesicle membrane. It is found in the host nucleus. The catalysed reaction is a ribonucleoside 5'-triphosphate + H2O = a ribonucleoside 5'-diphosphate + phosphate + H(+). It carries out the reaction Selective cleavage of Tyr-|-Gly bond in the picornavirus polyprotein.. The enzyme catalyses RNA(n) + a ribonucleoside 5'-triphosphate = RNA(n+1) + diphosphate. It catalyses the reaction Selective cleavage of Gln-|-Gly bond in the poliovirus polyprotein. In other picornavirus reactions Glu may be substituted for Gln, and Ser or Thr for Gly.. With respect to regulation, replication or transcription is subject to high level of random mutations by the nucleotide analog ribavirin. In terms of biological role, forms an icosahedral capsid of pseudo T=3 symmetry with capsid proteins VP2 and VP3. The capsid is 300 Angstroms in diameter, composed of 60 copies of each capsid protein and enclosing the viral positive strand RNA genome. Capsid protein VP1 mainly forms the vertices of the capsid. Capsid protein VP1 interacts with host cell receptor to provide virion attachment to target host cells. This attachment induces virion internalization. Tyrosine kinases are probably involved in the entry process. After binding to its receptor, the capsid undergoes conformational changes. Capsid protein VP1 N-terminus (that contains an amphipathic alpha-helix) and capsid protein VP4 are externalized. Together, they shape a pore in the host membrane through which viral genome is translocated to host cell cytoplasm. Its function is as follows. Forms an icosahedral capsid of pseudo T=3 symmetry with capsid proteins VP2 and VP3. The capsid is 300 Angstroms in diameter, composed of 60 copies of each capsid protein and enclosing the viral positive strand RNA genome. Functionally, lies on the inner surface of the capsid shell. After binding to the host receptor, the capsid undergoes conformational changes. Capsid protein VP4 is released, Capsid protein VP1 N-terminus is externalized, and together, they shape a pore in the host membrane through which the viral genome is translocated into the host cell cytoplasm. Component of immature procapsids, which is cleaved into capsid proteins VP4 and VP2 after maturation. Allows the capsid to remain inactive before the maturation step. In terms of biological role, cysteine protease that cleaves viral polyprotein and specific host proteins. It is responsible for the autocatalytic cleavage between the P1 and P2 regions, which is the first cleavage occurring in the polyprotein. Also cleaves the host translation initiation factor EIF4G1, in order to shut down the capped cellular mRNA translation. Inhibits the host nucleus-cytoplasm protein and RNA trafficking by cleaving host members of the nuclear pores. Counteracts stress granule formation probably by antagonizing its assembly or promoting its dissassembly. Its function is as follows. Plays an essential role in the virus replication cycle by acting as a viroporin. Creates a pore in the host endoplasmic reticulum and as a consequence releases Ca2+ in the cytoplasm of infected cell. In turn, high levels of cytoplasmic calcium may trigger membrane trafficking and transport of viral ER-associated proteins to viroplasms, sites of viral genome replication. Functionally, induces and associates with structural rearrangements of intracellular membranes. Displays RNA-binding, nucleotide binding and NTPase activities. May play a role in virion morphogenesis and viral RNA encapsidation by interacting with the capsid protein VP3. Localizes the viral replication complex to the surface of membranous vesicles. Together with protein 3CD binds the Cis-Active RNA Element (CRE) which is involved in RNA synthesis initiation. Acts as a cofactor to stimulate the activity of 3D polymerase, maybe through a nucleid acid chaperone activity. In terms of biological role, localizes the viral replication complex to the surface of membranous vesicles. It inhibits host cell endoplasmic reticulum-to-Golgi apparatus transport and causes the disassembly of the Golgi complex, possibly through GBF1 interaction. This would result in depletion of MHC, trail receptors and IFN receptors at the host cell surface. Plays an essential role in viral RNA replication by recruiting ACBD3 and PI4KB at the viral replication sites, thereby allowing the formation of the rearranged membranous structures where viral replication takes place. Its function is as follows. Acts as a primer for viral RNA replication and remains covalently bound to viral genomic RNA. VPg is uridylylated prior to priming replication into VPg-pUpU. The oriI viral genomic sequence may act as a template for this. The VPg-pUpU is then used as primer on the genomic RNA poly(A) by the RNA-dependent RNA polymerase to replicate the viral genome. During genome replication, the VPg-RNA linkage is removed by the host TDP2, thereby accelerating replication. During the late stage of the replication cycle, host TDP2 is excluded from sites of viral RNA synthesis and encapsidation, allowing for the generation of progeny virions. Functionally, involved in the viral replication complex and viral polypeptide maturation. It exhibits protease activity with a specificity and catalytic efficiency that is different from protease 3C. Protein 3CD lacks polymerase activity. Protein 3CD binds to the 5'UTR of the viral genome. Replicates the viral genomic RNA on the surface of intracellular membranes. May form linear arrays of subunits that propagate along a strong head-to-tail interaction called interface-I. Covalently attaches UMP to a tyrosine of VPg, which is used to prime RNA synthesis. The positive stranded RNA genome is first replicated at virus induced membranous vesicles, creating a dsRNA genomic replication form. This dsRNA is then used as template to synthesize positive stranded RNA genomes. ss(+)RNA genomes are either translated, replicated or encapsidated. In terms of biological role, major viral protease that mediates proteolytic processing of the polyprotein. Cleaves host EIF5B, contributing to host translation shutoff. Also cleaves host PABPC1, contributing to host translation shutoff. Cleaves host NLRP1, triggers host N-glycine-mediated degradation of the autoinhibitory NLRP1 N-terminal fragment. This is Genome polyprotein from Homo sapiens (Human).